The chain runs to 1059 residues: Putative ATP-dependent RNA helicase BoYb (1059 aa).

A Q motif motif is present at residues 54 to 82 (RRFAEVSLLPDILETMRNLGLNRLLRLQS). Residues 87 to 284 (HLAGGSGHGA…RAVNDKPALV (198 aa)) enclose the Helicase ATP-binding domain. 100 to 107 (GSPASGRT) is an ATP binding site. Residues 230-233 (DDVD) carry the DEAD box motif. The region spanning 575-639 (PPVAGAICMY…GKLFECPEAL (65 aa)) is the Tudor domain. Residues 756 to 787 (VQDSKEKANSKPHEKMKGKMTDQPAKLQSQPP) are disordered. Positions 757-775 (QDSKEKANSKPHEKMKGKM) are enriched in basic and acidic residues.

Its subcellular location is the cytoplasm. The enzyme catalyses ATP + H2O = ADP + phosphate + H(+). Involved in primary piRNA biogenesis in germline cells. The polypeptide is Putative ATP-dependent RNA helicase BoYb (BoYb) (Drosophila melanogaster (Fruit fly)).